Consider the following 101-residue polypeptide: Acylphosphatase (101 aa).

The Acylphosphatase-like domain maps to 11–99; it reads SWLVKAIGRV…PRLNRFDRLP (89 aa). Active-site residues include R26 and N44.

It belongs to the acylphosphatase family.

The enzyme catalyses an acyl phosphate + H2O = a carboxylate + phosphate + H(+). In Polaromonas naphthalenivorans (strain CJ2), this protein is Acylphosphatase (acyP).